We begin with the raw amino-acid sequence, 81 residues long: Conotoxin ViKr92 (81 aa).

The signal sequence occupies residues 1–22 (MKLTWMMIVAVLFLTAWTFVTA). Positions 23–51 (DDTRYKLENPFLKARNELQKLEASQLNER) are excised as a propeptide. 3 cysteine pairs are disulfide-bonded: cysteine 53/cysteine 70, cysteine 60/cysteine 74, and cysteine 69/cysteine 78.

The protein belongs to the conotoxin O1 superfamily. In terms of tissue distribution, expressed by the venom duct.

It localises to the secreted. The protein is Conotoxin ViKr92 of Conus virgo (Virgin cone).